The following is a 269-amino-acid chain: Thyroxine 5-deiodinase (269 aa).

Topologically, residues 1 to 14 (MLPAPHTCCRLLQQ) are cytoplasmic. Residues 15-35 (LLACCLLLPRFLLTVLLLWLL) form a helical; Signal-anchor for type II membrane protein membrane-spanning segment. Residues 36 to 269 (DFPCVRRRVI…TGNGALVIQV (234 aa)) lie on the Extracellular side of the membrane. Residue Sec133 is part of the active site. Sec133 is a non-standard amino acid (selenocysteine).

This sequence belongs to the iodothyronine deiodinase family. Monomer. Homodimer. May undergo minor heretodimerization with DIO1 and DIO2.

The protein resides in the cell membrane. Its subcellular location is the endosome membrane. The catalysed reaction is 3,3',5'-triiodo-L-thyronine + iodide + A + H(+) = L-thyroxine + AH2. The enzyme catalyses 3,3'-diiodo-L-thyronine + iodide + A + H(+) = 3,3',5-triiodo-L-thyronine + AH2. It carries out the reaction 3-iodo-L-thyronine + iodide + A + H(+) = 3,5-diiodo-L-thyronine + AH2. It catalyses the reaction L-thyronine + iodide + A + H(+) = 3-iodo-L-thyronine + AH2. The catalysed reaction is 3',5'-diiodo-L-thyronine + iodide + A + H(+) = 3,3',5'-triiodo-L-thyronine + AH2. The enzyme catalyses 3'-iodo-L-thyronine + iodide + A + H(+) = 3,3'-diiodo-L-thyronine + AH2. It carries out the reaction 3,3',5'-triiodothyronamine + iodide + A + H(+) = 3,3',5,5'-tetraiodothyronamine + AH2. It catalyses the reaction 3',5'-diiodothyronamine + iodide + A + H(+) = 3,3',5'-triiodothyronamine + AH2. The catalysed reaction is 3,3'-diiodothyronamine + iodide + A + H(+) = 3,3',5-triiodothyronamine + AH2. The enzyme catalyses 3-iodothyronamine + iodide + A + H(+) = 3,5-diiodothyronamine + AH2. It carries out the reaction 3'-iodothyronamine + iodide + A + H(+) = 3,3'-diiodothyronamine + AH2. It catalyses the reaction thyronamine + iodide + A + H(+) = 3-iodothyronamine + AH2. Functionally, plays a crucial role in the metabolism of thyroid hormones (TH) and has specific roles in TH activation and inactivation by deiodination. Catalyzes the deiodination of L-thyroxine (T4) to 3,3',5'-triiodothyronine (rT3), 3,5-diiodothyronine (3,5-T2) to 3-monoiodothyronine (3-T1), rT3 to 3',5'-diiodothyronine (3',5'-T2) and 3,3'-diiodothyronine (3,3'-T2) to 3'-monoiodothyronine (3'-T1) via inner-ring deiodination (IRD). Catalyzes the deiodination of 3,5,3'-triiodothyronine (T3) to 3,3'-diiodothyronine (3,3'-T2) via IRD. Catalyzes the deiodination of 3-T1 to L-thyronine (T0) via outer-ring deiodination (ORD). Catalyzes the tyrosyl ring deiodinations of 3,3',5,5'-tetraiodothyronamine, 3,3',5'-triiodothyronamine, 3,5,3'-triiodothyronamine, 3,5-diiodothyronamine, 3,3'-diiodothyronamine and 3-iodothyronamine. This is Thyroxine 5-deiodinase (dio3) from Aquarana catesbeiana (American bullfrog).